Reading from the N-terminus, the 41-residue chain is U3-theraphotoxin-Hs1a (41 aa).

Intrachain disulfides connect Cys-2–Cys-16, Cys-9–Cys-37, and Cys-17–Cys-40.

Belongs to the neurotoxin 14 (magi-1) family. 01 (HNTX-16) subfamily. In terms of tissue distribution, expressed by the venom gland.

Its subcellular location is the secreted. Its function is as follows. Intracerebroventricular injection paralyzes mice. Has no effect on voltage-gated sodium currents. The chain is U3-theraphotoxin-Hs1a from Cyriopagopus schmidti (Chinese bird spider).